Here is a 238-residue protein sequence, read N- to C-terminus: Large ribosomal subunit protein uL2 (238 aa).

The segment at 201 to 238 (FGGGGHQHPGRPKTIARGTSPGRTVGHVAARQTGRSRK) is disordered.

This sequence belongs to the universal ribosomal protein uL2 family. As to quaternary structure, part of the 50S ribosomal subunit. Forms a bridge to the 30S subunit in the 70S ribosome.

Its function is as follows. One of the primary rRNA binding proteins. Required for association of the 30S and 50S subunits to form the 70S ribosome, for tRNA binding and peptide bond formation. It has been suggested to have peptidyltransferase activity; this is somewhat controversial. Makes several contacts with the 16S rRNA in the 70S ribosome. The chain is Large ribosomal subunit protein uL2 from Methanoregula boonei (strain DSM 21154 / JCM 14090 / 6A8).